Reading from the N-terminus, the 568-residue chain is Methionine--tRNA ligase (568 aa).

The 'HIGH' region signature appears at 10 to 20 (PYVQSVPHLGN). Zn(2+) contacts are provided by cysteine 143, cysteine 146, cysteine 156, and cysteine 159. The 'KMSKS' region signature appears at 333–337 (KFSKS). Position 336 (lysine 336) interacts with ATP.

It belongs to the class-I aminoacyl-tRNA synthetase family. MetG type 1 subfamily. Zn(2+) serves as cofactor.

It is found in the cytoplasm. It catalyses the reaction tRNA(Met) + L-methionine + ATP = L-methionyl-tRNA(Met) + AMP + diphosphate. Is required not only for elongation of protein synthesis but also for the initiation of all mRNA translation through initiator tRNA(fMet) aminoacylation. This Metallosphaera sedula (strain ATCC 51363 / DSM 5348 / JCM 9185 / NBRC 15509 / TH2) protein is Methionine--tRNA ligase.